A 73-amino-acid polypeptide reads, in one-letter code: Putative membrane protein insertion efficiency factor (73 aa).

Belongs to the UPF0161 family.

It localises to the cell inner membrane. In terms of biological role, could be involved in insertion of integral membrane proteins into the membrane. The protein is Putative membrane protein insertion efficiency factor of Bacteroides fragilis (strain ATCC 25285 / DSM 2151 / CCUG 4856 / JCM 11019 / LMG 10263 / NCTC 9343 / Onslow / VPI 2553 / EN-2).